Reading from the N-terminus, the 202-residue chain is Pyridoxal 5'-phosphate synthase subunit PdxT (202 aa).

49 to 51 (GES) contacts L-glutamine. The active-site Nucleophile is Cys81. Residues Arg110 and 139–140 (IR) contribute to the L-glutamine site. Residues His182 and Glu184 each act as charge relay system in the active site.

It belongs to the glutaminase PdxT/SNO family. As to quaternary structure, in the presence of PdxS, forms a dodecamer of heterodimers. Only shows activity in the heterodimer.

It catalyses the reaction aldehydo-D-ribose 5-phosphate + D-glyceraldehyde 3-phosphate + L-glutamine = pyridoxal 5'-phosphate + L-glutamate + phosphate + 3 H2O + H(+). It carries out the reaction L-glutamine + H2O = L-glutamate + NH4(+). The protein operates within cofactor biosynthesis; pyridoxal 5'-phosphate biosynthesis. In terms of biological role, catalyzes the hydrolysis of glutamine to glutamate and ammonia as part of the biosynthesis of pyridoxal 5'-phosphate. The resulting ammonia molecule is channeled to the active site of PdxS. This Rhodococcus opacus (strain B4) protein is Pyridoxal 5'-phosphate synthase subunit PdxT.